The primary structure comprises 156 residues: Dynein 16 kDa light chain, flagellar outer arm (156 aa).

The Thioredoxin domain maps to 2 to 116 (AAGLPPVQYS…LNQQVLSLTP (115 aa)). Cys-37 and Cys-40 are joined by a disulfide.

As to quaternary structure, consists of at least 3 heavy chains (alpha, beta and gamma), 2 intermediate chains and 8 light chains.

The protein resides in the cell projection. It is found in the cilium. Its subcellular location is the flagellum. It localises to the cytoplasm. The protein localises to the cytoskeleton. The protein resides in the flagellum axoneme. Functionally, may be involved in regulating the redox state of functionally important thiol groups within dynein. This is Dynein 16 kDa light chain, flagellar outer arm from Chlamydomonas reinhardtii (Chlamydomonas smithii).